Reading from the N-terminus, the 293-residue chain is Ribosomal protein L11 methyltransferase (293 aa).

S-adenosyl-L-methionine is bound by residues Thr-145, Gly-166, Asp-188, and Asn-230.

The protein belongs to the methyltransferase superfamily. PrmA family.

It localises to the cytoplasm. It carries out the reaction L-lysyl-[protein] + 3 S-adenosyl-L-methionine = N(6),N(6),N(6)-trimethyl-L-lysyl-[protein] + 3 S-adenosyl-L-homocysteine + 3 H(+). Its function is as follows. Methylates ribosomal protein L11. The chain is Ribosomal protein L11 methyltransferase from Shigella sonnei (strain Ss046).